The sequence spans 428 residues: MLSRRARESNAWFLERFKRPLGRQGSKSNTNIDLATAENWLIRPEILSALKRNLQADFQSSHLSYAPGLGGTPELLSAISTFFNHFFSPTIPVAPEHIVTGAGCSSVLDTLINDICDDGDGLLVAAPYWGSFEVSSVLRNGVTLIPVQIKFHESHSAQGIVDAYRKAMENTSCKVRGLLFCNPHNPWGHILSVEVIDALLLFCEQADIHFVSDEIYALSTFGRMELPSGNLEHGEKFLSPATSFVSVLSRDLIKLGGCLITQANKELRMSQAILNNAKLCNAASAMVAPILGSTSQLSTLVNLNVQRMRKAARTAIQFAQFHGLTFCEPVAGVYIWLRLSEDCHTRDDEEEIVQRCTKHGALVGSGSDYSESQPGWFRLTFAIPDNEFLEGLNRIETAMGYKERFNGEMVQSSLGGFVSQLWKRFVLV.

Lysine 254 carries the post-translational modification N6-(pyridoxal phosphate)lysine.

Belongs to the class-I pyridoxal-phosphate-dependent aminotransferase family. Pyridoxal 5'-phosphate serves as cofactor.

The protein operates within mycotoxin biosynthesis. Its function is as follows. Aminotransferase; part of the gene cluster that mediates the biosynthesis of 11'-deoxyverticillin A, one of the dimeric epipolythiodioxopiperazines (ETPs) from the verticillin family that act as mycotoxins. 11'-deoxyverticillin A is required for normal conidiation. The nonribosomal peptide synthetase verP is speculated to be responsible for condensation of amino acids to form the carbon skeleton of verticillin, whereas the cluster-specific tailoring enzymes are involved in further modifications leading to the production of 11'-deoxyverticillin A. This is Aminotransferase verI from Clonostachys rogersoniana.